The sequence spans 209 residues: Potassium-transporting ATPase KdpC subunit (209 aa).

Residues 18-38 (ALALFVLLGLGLGYSLVATGI) traverse the membrane as a helical segment.

This sequence belongs to the KdpC family. In terms of assembly, the system is composed of three essential subunits: KdpA, KdpB and KdpC.

Its subcellular location is the cell inner membrane. In terms of biological role, part of the high-affinity ATP-driven potassium transport (or Kdp) system, which catalyzes the hydrolysis of ATP coupled with the electrogenic transport of potassium into the cytoplasm. This subunit acts as a catalytic chaperone that increases the ATP-binding affinity of the ATP-hydrolyzing subunit KdpB by the formation of a transient KdpB/KdpC/ATP ternary complex. The chain is Potassium-transporting ATPase KdpC subunit from Xanthomonas campestris pv. campestris (strain 8004).